The chain runs to 137 residues: Kunitz-type trypsin inhibitor alpha chain (137 aa).

Cysteines 40 and 86 form a disulfide.

This sequence belongs to the protease inhibitor I3 (leguminous Kunitz-type inhibitor) family. Heterodimer of an alpha and a beta chain linked by a disulfide bond.

Functionally, inhibition of trypsin. The polypeptide is Kunitz-type trypsin inhibitor alpha chain (Neltuma juliflora (Mesquite)).